A 173-amino-acid chain; its full sequence is Alpha-crystallin A chain (173 aa).

Residue Met-1 is modified to N-acetylmethionine. The required for complex formation with BFSP1 and BFSP2 stretch occupies residues 1–63 (MDVTIQHPWF…RTVLDSGISE (63 aa)). At Gln-6 the chain carries Deamidated glutamine; partial. The residue at position 45 (Ser-45) is a Phosphoserine. A Deamidated glutamine; partial modification is found at Gln-50. Positions 52 to 162 (LFRTVLDSGI…GHSERAIPVS (111 aa)) constitute a sHSP domain. The residue at position 70 (Lys-70) is an N6-acetyllysine. At Gln-90 the chain carries Deamidated glutamine; partial. N6-acetyllysine is present on Lys-99. Zn(2+)-binding residues include His-100, Glu-102, and His-107. The residue at position 122 (Ser-122) is a Phosphoserine. Position 123 is a deamidated asparagine; partial (Asn-123). The tract at residues 145-173 (KVQSGLDAGHSERAIPVSREEKPSSAPSS) is disordered. Gln-147 is subject to Deamidated glutamine; partial. Residues 153 to 167 (GHSERAIPVSREEKP) show a composition bias toward basic and acidic residues. A Zn(2+)-binding site is contributed by His-154. O-linked (GlcNAc) serine glycosylation occurs at Ser-162.

It belongs to the small heat shock protein (HSP20) family. In terms of assembly, heteromer composed of three CRYAA and one CRYAB subunits. Inter-subunit bridging via zinc ions enhances stability, which is crucial as there is no protein turn over in the lens. Can also form homodimers and homotetramers (dimers of dimers) which serve as the building blocks of homooligomers. Within homooligomers, the zinc-binding motif is created from residues of 3 different molecules. His-100 and Glu-102 from one molecule are ligands of the zinc ion, and His-107 and His-154 residues from additional molecules complete the site with tetrahedral coordination geometry. Part of a complex required for lens intermediate filament formation composed of BFSP1, BFSP2 and CRYAA. In terms of processing, acetylation at Lys-70 may increase chaperone activity. Undergoes age-dependent proteolytical cleavage at the C-terminus.

The protein localises to the cytoplasm. Its subcellular location is the nucleus. Contributes to the transparency and refractive index of the lens. Acts as a chaperone, preventing aggregation of various proteins under a wide range of stress conditions. Required for the correct formation of lens intermediate filaments as part of a complex composed of BFSP1, BFSP2 and CRYAA. In Ochotona princeps (Southern American pika), this protein is Alpha-crystallin A chain (CRYAA).